A 216-amino-acid polypeptide reads, in one-letter code: Peptide methionine sulfoxide reductase MsrA (216 aa).

C54 is an active-site residue.

Belongs to the MsrA Met sulfoxide reductase family.

The catalysed reaction is L-methionyl-[protein] + [thioredoxin]-disulfide + H2O = L-methionyl-(S)-S-oxide-[protein] + [thioredoxin]-dithiol. It carries out the reaction [thioredoxin]-disulfide + L-methionine + H2O = L-methionine (S)-S-oxide + [thioredoxin]-dithiol. In terms of biological role, has an important function as a repair enzyme for proteins that have been inactivated by oxidation. Catalyzes the reversible oxidation-reduction of methionine sulfoxide in proteins to methionine. The protein is Peptide methionine sulfoxide reductase MsrA of Xanthomonas campestris pv. campestris (strain ATCC 33913 / DSM 3586 / NCPPB 528 / LMG 568 / P 25).